Consider the following 365-residue polypeptide: Peptide chain release factor 1 (365 aa).

Gln242 carries the N5-methylglutamine modification.

Belongs to the prokaryotic/mitochondrial release factor family. In terms of processing, methylated by PrmC. Methylation increases the termination efficiency of RF1.

Its subcellular location is the cytoplasm. Functionally, peptide chain release factor 1 directs the termination of translation in response to the peptide chain termination codons UAG and UAA. The polypeptide is Peptide chain release factor 1 (Fusobacterium nucleatum subsp. nucleatum (strain ATCC 25586 / DSM 15643 / BCRC 10681 / CIP 101130 / JCM 8532 / KCTC 2640 / LMG 13131 / VPI 4355)).